We begin with the raw amino-acid sequence, 63 residues long: Large ribosomal subunit protein uL29 (63 aa).

Belongs to the universal ribosomal protein uL29 family.

This chain is Large ribosomal subunit protein uL29, found in Haemophilus influenzae (strain 86-028NP).